Consider the following 416-residue polypeptide: Trehalose synthase (416 aa).

This sequence belongs to the glycosyltransferase group 1 family. Glycosyltransferase 4 subfamily. As to quaternary structure, homodimer. It depends on Mg(2+) as a cofactor.

The enzyme catalyses an NDP-alpha-D-glucose + D-glucose = alpha,alpha-trehalose + a ribonucleoside 5'-diphosphate + H(+). Its activity is regulated as follows. Inhibited by 20 mM Fe(3+) and Mn(2+). Partially inhibited by Zn(2+) and Ni(2+). Activity is slightly enhanced by 2 mM Fe (3+), Mn (2+), Ca(2+) or Li(+) and by 20 mM Mg(2+), Ca(2+) or Li(+). Its function is as follows. Synthesizes trehalose from ADP-glucose and glucose. The reaction is reversible, the equilibrium strongly favors trehalose synthesis. This is Trehalose synthase from Rubrobacter xylanophilus (strain DSM 9941 / JCM 11954 / NBRC 16129 / PRD-1).